The primary structure comprises 463 residues: Fumarate hydratase class II (463 aa).

Residues serine 98–threonine 100, histidine 129–aspartate 132, serine 139–asparagine 141, and threonine 187 contribute to the substrate site. Residues lysine 121–asparagine 141 are disordered. The Proton donor/acceptor role is filled by histidine 188. Serine 318 is an active-site residue. Substrate-binding positions include serine 319 and lysine 324–asparagine 326.

It belongs to the class-II fumarase/aspartase family. Fumarase subfamily. As to quaternary structure, homotetramer.

It localises to the cytoplasm. The enzyme catalyses (S)-malate = fumarate + H2O. Its pathway is carbohydrate metabolism; tricarboxylic acid cycle; (S)-malate from fumarate: step 1/1. Involved in the TCA cycle. Catalyzes the stereospecific interconversion of fumarate to L-malate. This Rickettsia conorii (strain ATCC VR-613 / Malish 7) protein is Fumarate hydratase class II.